We begin with the raw amino-acid sequence, 436 residues long: GTPase Der (436 aa).

2 EngA-type G domains span residues 4–167 and 176–351; these read PVVA…PKDH and IKFC…DNHA. GTP-binding positions include 10–17, 57–61, 119–122, 182–189, 229–233, and 294–297; these read GRPNVGKS, DTGGI, NKID, DTAGM, and NKWD. The 85-residue stretch at 352-436 folds into the KH-like domain; the sequence is MRVQTNVLNE…PIKIIARPRK (85 aa).

The protein belongs to the TRAFAC class TrmE-Era-EngA-EngB-Septin-like GTPase superfamily. EngA (Der) GTPase family. In terms of assembly, associates with the 50S ribosomal subunit.

In terms of biological role, GTPase that plays an essential role in the late steps of ribosome biogenesis. The protein is GTPase Der of Geobacillus thermodenitrificans (strain NG80-2).